A 504-amino-acid polypeptide reads, in one-letter code: Cytochrome P450 3A41 (504 aa).

A heme-binding site is contributed by cysteine 443.

Belongs to the cytochrome P450 family. It depends on heme as a cofactor. In terms of tissue distribution, expressed in liver. Also expressed in the kidneys of female mice, with traces in the stomach, ovary, and heart of female mice and in the testis of male mice.

It is found in the endoplasmic reticulum membrane. The protein resides in the microsome membrane. The catalysed reaction is an organic molecule + reduced [NADPH--hemoprotein reductase] + O2 = an alcohol + oxidized [NADPH--hemoprotein reductase] + H2O + H(+). This chain is Cytochrome P450 3A41 (Cyp3a41a), found in Mus musculus (Mouse).